A 263-amino-acid polypeptide reads, in one-letter code: Undecaprenyl-diphosphatase 2 (263 aa).

Transmembrane regions (helical) follow at residues 15–37 (GLTE…LLGF), 42–62 (AKVF…VIFW), 83–103 (LHII…HSAI), 106–126 (VLFG…LMIV), 142–162 (ITYK…WPGF), 183–203 (AEYT…LDLI), 216–236 (LFAT…VSFL), and 242–262 (VKLT…YFFI).

This sequence belongs to the UppP family.

Its subcellular location is the cell membrane. The catalysed reaction is di-trans,octa-cis-undecaprenyl diphosphate + H2O = di-trans,octa-cis-undecaprenyl phosphate + phosphate + H(+). In terms of biological role, catalyzes the dephosphorylation of undecaprenyl diphosphate (UPP). Confers resistance to bacitracin. The protein is Undecaprenyl-diphosphatase 2 of Bacillus cereus (strain ATCC 10987 / NRS 248).